A 187-amino-acid polypeptide reads, in one-letter code: Elongation factor P (187 aa).

The protein belongs to the elongation factor P family.

Its subcellular location is the cytoplasm. Its pathway is protein biosynthesis; polypeptide chain elongation. Its function is as follows. Involved in peptide bond synthesis. Stimulates efficient translation and peptide-bond synthesis on native or reconstituted 70S ribosomes in vitro. Probably functions indirectly by altering the affinity of the ribosome for aminoacyl-tRNA, thus increasing their reactivity as acceptors for peptidyl transferase. This chain is Elongation factor P, found in Corynebacterium glutamicum (strain R).